Here is a 105-residue protein sequence, read N- to C-terminus: Class I hydrophobin 1 (105 aa).

A signal peptide spans 1–18 (MAFIKSLLIASVAAVAFA). 4 disulfide bridges follow: Cys42–Cys83, Cys50–Cys76, Cys51–Cys62, and Cys84–Cys100.

Belongs to the fungal hydrophobin family. Self-assembles to form functional amyloid fibrils called rodlets. Self-assembly into fibrillar rodlets occurs spontaneously at hydrophobic:hydrophilic interfaces and the rodlets further associate laterally to form amphipathic monolayers.

It is found in the secreted. The protein localises to the cell wall. Its function is as follows. Aerial growth, conidiation, and dispersal of filamentous fungi in the environment rely upon a capability of their secreting small amphipathic proteins called hydrophobins (HPBs) with low sequence identity. Class I can self-assemble into an outermost layer of rodlet bundles on aerial cell surfaces, conferring cellular hydrophobicity that supports fungal growth, development and dispersal; whereas Class II form highly ordered films at water-air interfaces through intermolecular interactions but contribute nothing to the rodlet structure. The chain is Class I hydrophobin 1 from Davidiella tassiana (Mycosphaerella tassiana).